The following is a 426-amino-acid chain: Protein arginine N-methyltransferase 2 (426 aa).

2 disordered regions span residues 65-88 and 155-175; these read DEEE…GQES and DEEM…AVAA. The segment covering 73 to 88 has biased composition (polar residues); it reads NGVQTNGDRQTHGQES. Residues 155 to 168 show a composition bias toward acidic residues; the sequence is DEEMEEDGEQEQEQ. The RMT2 domain maps to 207–426; it reads PSVTSSRYLN…YRLPLCKYMD (220 aa). Residues Tyr-214, Met-243, 263 to 268, 284 to 286, 311 to 312, and Asp-331 each bind S-adenosyl-L-methionine; these read HGMGIV, EAH, and WQ.

It belongs to the class I-like SAM-binding methyltransferase superfamily. RMT2 methyltransferase family. As to quaternary structure, monomer.

It localises to the cytoplasm. The protein resides in the nucleus. In terms of biological role, S-adenosyl-L-methionine-dependent protein-arginine N-methyltransferase that methylates the delta-nitrogen atom of arginine residues to form N5-methylarginine (type IV) in target proteins. Monomethylates ribosomal protein L12. This Emericella nidulans (strain FGSC A4 / ATCC 38163 / CBS 112.46 / NRRL 194 / M139) (Aspergillus nidulans) protein is Protein arginine N-methyltransferase 2.